The sequence spans 73 residues: Disintegrin molossin (73 aa).

In terms of domain architecture, Disintegrin spans Glu1–Ala73. Disulfide bonds link Cys6-Cys21, Cys8-Cys16, Cys15-Cys38, Cys29-Cys35, Cys34-Cys59, and Cys47-Cys66. Residues Arg51–Asp53 carry the Cell attachment site motif.

Belongs to the venom metalloproteinase (M12B) family. P-II subfamily. P-IIa sub-subfamily. Monomer (disintegrin). Expressed by the venom gland.

Its subcellular location is the secreted. Its function is as follows. Inhibits fibrinogen interaction with platelets. Acts by binding to alpha-IIb/beta-3 (ITGA2B/ITGB3) on the platelet surface and inhibits aggregation induced by ADP, thrombin, platelet-activating factor and collagen. The polypeptide is Disintegrin molossin (Crotalus molossus molossus (Northern black-tailed rattlesnake)).